We begin with the raw amino-acid sequence, 159 residues long: Small ribosomal subunit protein uS15 (159 aa).

The segment covering 1-16 (MNKRKEKGKSHSKRPV) has biased composition (basic residues). The interval 1–22 (MNKRKEKGKSHSKRPVRNTPPR) is disordered.

This sequence belongs to the universal ribosomal protein uS15 family. As to quaternary structure, part of the 30S ribosomal subunit.

This is Small ribosomal subunit protein uS15 from Ignicoccus hospitalis (strain KIN4/I / DSM 18386 / JCM 14125).